We begin with the raw amino-acid sequence, 201 residues long: dITP/XTP pyrophosphatase (201 aa).

Residue 7-12 (TNNKGK) coordinates substrate. Residues Glu40 and Asp69 each coordinate Mg(2+). Asp69 acts as the Proton acceptor in catalysis. Substrate-binding positions include Ser70, 152-155 (FGYD), Lys175, and 180-181 (HR).

The protein belongs to the HAM1 NTPase family. Homodimer. Requires Mg(2+) as cofactor.

The catalysed reaction is XTP + H2O = XMP + diphosphate + H(+). The enzyme catalyses dITP + H2O = dIMP + diphosphate + H(+). It catalyses the reaction ITP + H2O = IMP + diphosphate + H(+). In terms of biological role, pyrophosphatase that catalyzes the hydrolysis of nucleoside triphosphates to their monophosphate derivatives, with a high preference for the non-canonical purine nucleotides XTP (xanthosine triphosphate), dITP (deoxyinosine triphosphate) and ITP. Seems to function as a house-cleaning enzyme that removes non-canonical purine nucleotides from the nucleotide pool, thus preventing their incorporation into DNA/RNA and avoiding chromosomal lesions. The protein is dITP/XTP pyrophosphatase of Desulforamulus reducens (strain ATCC BAA-1160 / DSM 100696 / MI-1) (Desulfotomaculum reducens).